The following is a 492-amino-acid chain: 3-octaprenyl-4-hydroxybenzoate carboxy-lyase (492 aa).

Mn(2+) is bound at residue asparagine 177. Residues 180–182 (IYR), 194–196 (RWL), and 199–200 (RG) each bind prenylated FMN. Mn(2+) is bound at residue glutamate 243. Aspartate 292 (proton donor) is an active-site residue.

This sequence belongs to the UbiD family. In terms of assembly, homohexamer. It depends on prenylated FMN as a cofactor. Mn(2+) serves as cofactor.

Its subcellular location is the cell membrane. It catalyses the reaction a 4-hydroxy-3-(all-trans-polyprenyl)benzoate + H(+) = a 2-(all-trans-polyprenyl)phenol + CO2. It functions in the pathway cofactor biosynthesis; ubiquinone biosynthesis. Its function is as follows. Catalyzes the decarboxylation of 3-octaprenyl-4-hydroxy benzoate to 2-octaprenylphenol, an intermediate step in ubiquinone biosynthesis. This is 3-octaprenyl-4-hydroxybenzoate carboxy-lyase from Neisseria meningitidis serogroup A / serotype 4A (strain DSM 15465 / Z2491).